Reading from the N-terminus, the 100-residue chain is Urease subunit gamma (100 aa).

This sequence belongs to the urease gamma subunit family. As to quaternary structure, heterotrimer of UreA (gamma), UreB (beta) and UreC (alpha) subunits. Three heterotrimers associate to form the active enzyme.

The protein resides in the cytoplasm. The catalysed reaction is urea + 2 H2O + H(+) = hydrogencarbonate + 2 NH4(+). Its pathway is nitrogen metabolism; urea degradation; CO(2) and NH(3) from urea (urease route): step 1/1. In Staphylococcus epidermidis (strain ATCC 35984 / DSM 28319 / BCRC 17069 / CCUG 31568 / BM 3577 / RP62A), this protein is Urease subunit gamma.